Here is a 214-residue protein sequence, read N- to C-terminus: Homeobox protein HEX homolog pha-2 (214 aa).

Disordered stretches follow at residues 1–50 and 180–214; these read MDQK…QKME and RRVR…LSHG. The segment covering 24–34 has biased composition (low complexity); the sequence is SSESPIPTGSE. Over residues 35–44 the composition is skewed to polar residues; it reads CSLNESSDTT. Positions 124 to 183 form a DNA-binding region, homeobox; it reads RKGGQIRFTNEQTDALEHKFDSHKYLSPQERKKLAKSLSLSERQVKTWFQNRRAKWRRVR. A compositionally biased stretch (polar residues) spans 200-214; it reads SLGQLQSSNPFLSHG.

Its subcellular location is the nucleus. Functionally, transcriptional repressor. Involved in pharyngeal development and required for the formation of the pharyngeal isthmus. Plays a role in modulating cytoskeleton in the muscle cells of the isthmus. Regulates expression of the acetylcholinesterase genes ace-1 and ace-2. May regulate its own expression. This is Homeobox protein HEX homolog pha-2 from Caenorhabditis elegans.